The following is a 421-amino-acid chain: Fusaric acid cluster transcription factor FUB10 (421 aa).

Residues 16 to 47 constitute a DNA-binding region (zn(2)-C6 fungal-type); the sequence is CDRCRAQKLRCHRDSGHSTDACLRCLKSGIEC. The segment at 50 to 92 is disordered; that stretch reads SKARPTGRPPSRQVQPTVVVEQGDTSSSSHTTDSSPSAGGTDM. Positions 74 to 86 are enriched in low complexity; the sequence is TSSSSHTTDSSPS.

The protein resides in the nucleus. Functionally, transcription factor that regulates the expression of the gene cluster that mediates the biosynthesis of fusaric acid, a mycotoxin with low to moderate toxicity to animals and humans, but with high phytotoxic properties. The protein is Fusaric acid cluster transcription factor FUB10 of Gibberella moniliformis (strain M3125 / FGSC 7600) (Maize ear and stalk rot fungus).